The sequence spans 410 residues: MDFMAQDPEVFGAIHNEEERQEHNIELIASENIVSPAVRAAQGSVLTNKYSEGYPGHRYYGGNQYIDVVENLAIDRAKKLFGAEFANVQPHSGSQANMATYRAFLEDGDKVLAMDLTDGGHLTHGSPVSFSGQEYHFYHYGLDPKTERLNYAKIREQAEQVQPRMIVAGASAYSREIDFKKFREIADHVGAFLMVDMAHIAGLVAAGLHMNPVPYADVVTTTTHKTLRGPRGGLILAKAQYGKAINSALFPGIQGGPLDHVVAAKAVALGEALQPSFKTYAQHILDNMQAMVSGFEEDPHLRLISGGSDNHMVLIDVTGYGVNGRQVQDLLDEVGITTNKNQIPGEQNGPFKTSGIRVGTAAITTRGFTADESKRVGELISAAIAQRDDQPALDQIHQEVLALTARHPLS.

(6S)-5,6,7,8-tetrahydrofolate contacts are provided by residues L116 and 120–122 (GHL). K225 bears the N6-(pyridoxal phosphate)lysine mark.

The protein belongs to the SHMT family. Homodimer. Pyridoxal 5'-phosphate is required as a cofactor.

The protein localises to the cytoplasm. It catalyses the reaction (6R)-5,10-methylene-5,6,7,8-tetrahydrofolate + glycine + H2O = (6S)-5,6,7,8-tetrahydrofolate + L-serine. It participates in one-carbon metabolism; tetrahydrofolate interconversion. The protein operates within amino-acid biosynthesis; glycine biosynthesis; glycine from L-serine: step 1/1. Its function is as follows. Catalyzes the reversible interconversion of serine and glycine with tetrahydrofolate (THF) serving as the one-carbon carrier. This reaction serves as the major source of one-carbon groups required for the biosynthesis of purines, thymidylate, methionine, and other important biomolecules. Also exhibits THF-independent aldolase activity toward beta-hydroxyamino acids, producing glycine and aldehydes, via a retro-aldol mechanism. This is Serine hydroxymethyltransferase from Lacticaseibacillus casei (strain BL23) (Lactobacillus casei).